Consider the following 309-residue polypeptide: MILEDLLMVLSCLSLHALWKVRAVPILPLSLVPDTFDDAYVGCSEEMEEKAGLLLKEEMARHALLRESWEAAQEAWAHRRHKLTLPPGFKAQHGVAIMVYTNSSNTLYWELNQAVRTGGGSRELYMRHFPFKALHFYLTRALQLLRGSGGCSRGPGEVVFRGVGSLHFEPKRLGDSVRLGQFTSSSVDERVARRFGNATFFNLRTCFGAPIQALSVFPEEREVLIPPHEVFLVTGFSQDGAQSIVTLWSYDQTCSHFNCAYLGGEKRRGCVSSRAVGQPEAPSTEALALQSGKTLLLDPRKLQLSRAGP.

Positions 1 to 23 (MILEDLLMVLSCLSLHALWKVRA) are cleaved as a signal peptide. Cys-43 and Cys-259 are oxidised to a cystine. The TR mART core domain occupies 63–253 (ALLRESWEAA…IVTLWSYDQT (191 aa)). Tyr-100 provides a ligand contact to NAD(+). N-linked (GlcNAc...) asparagine glycosylation occurs at Asn-102. NAD(+) contacts are provided by Arg-161 and Gln-181. Residue Arg-161 is part of the active site. The active site involves Ser-184. N-linked (GlcNAc...) asparagine glycosylation occurs at Asn-197. Ser-215 contacts NAD(+). Glu-222 is an active-site residue.

It belongs to the Arg-specific ADP-ribosyltransferase family. As to expression, abundantly expressed in testis. Lower levels in cardiac and skeletal muscle.

The protein resides in the secreted. It is found in the membrane. It catalyses the reaction L-arginyl-[protein] + NAD(+) = N(omega)-(ADP-D-ribosyl)-L-arginyl-[protein] + nicotinamide + H(+). The protein is Ecto-ADP-ribosyltransferase 5 (Art5) of Mus musculus (Mouse).